The primary structure comprises 448 residues: Asparagine--tRNA ligase (448 aa).

Belongs to the class-II aminoacyl-tRNA synthetase family. Homodimer.

The protein resides in the cytoplasm. The enzyme catalyses tRNA(Asn) + L-asparagine + ATP = L-asparaginyl-tRNA(Asn) + AMP + diphosphate + H(+). The chain is Asparagine--tRNA ligase from Streptococcus sanguinis (strain SK36).